A 394-amino-acid polypeptide reads, in one-letter code: uncharacterized protein (394 aa).

Residues asparagine 3, asparagine 14, asparagine 20, and asparagine 25 are each glycosylated (N-linked (GlcNAc...) asparagine). The next 6 helical transmembrane spans lie at 64-84 (AVGI…LVNI), 101-121 (FIWI…YIDV), 133-153 (IFSF…WHVI), 180-200 (IFVV…MGFF), 228-248 (VLLA…SFVY), and 256-276 (WVGM…QFLE). 2 N-linked (GlcNAc...) asparagine glycosylation sites follow: asparagine 283 and asparagine 286. Residues 291-311 (AGLVFGLGFCPPLILAYTVCI) traverse the membrane as a helical segment. Residue asparagine 344 is glycosylated (N-linked (GlcNAc...) asparagine).

Its subcellular location is the membrane. This is an uncharacterized protein from Schizosaccharomyces pombe (strain 972 / ATCC 24843) (Fission yeast).